We begin with the raw amino-acid sequence, 312 residues long: Ribosomal RNA small subunit methyltransferase H (312 aa).

S-adenosyl-L-methionine is bound by residues 35-37, Asp-55, Phe-79, Asp-101, and Gln-108; that span reads GGH.

This sequence belongs to the methyltransferase superfamily. RsmH family.

The protein resides in the cytoplasm. It catalyses the reaction cytidine(1402) in 16S rRNA + S-adenosyl-L-methionine = N(4)-methylcytidine(1402) in 16S rRNA + S-adenosyl-L-homocysteine + H(+). Functionally, specifically methylates the N4 position of cytidine in position 1402 (C1402) of 16S rRNA. This is Ribosomal RNA small subunit methyltransferase H from Glaesserella parasuis serovar 5 (strain SH0165) (Haemophilus parasuis).